A 170-amino-acid polypeptide reads, in one-letter code: Endoribonuclease YbeY (170 aa).

Positions 128, 132, and 138 each coordinate Zn(2+).

The protein belongs to the endoribonuclease YbeY family. The cofactor is Zn(2+).

The protein localises to the cytoplasm. Single strand-specific metallo-endoribonuclease involved in late-stage 70S ribosome quality control and in maturation of the 3' terminus of the 16S rRNA. This Ruegeria sp. (strain TM1040) (Silicibacter sp.) protein is Endoribonuclease YbeY.